The chain runs to 933 residues: Bifunctional uridylyltransferase/uridylyl-removing enzyme (933 aa).

The segment at 1–379 (MAKISLKLDE…TFQRRKRKLA (379 aa)) is uridylyltransferase. Residues 380–736 (GTSDFIVDNH…VKTHQFEAVT (357 aa)) are uridylyl-removing. An HD domain is found at 496-619 (VDEHLIRCIG…VQSVERLKLL (124 aa)). 2 consecutive ACT domains span residues 737–818 (EITV…EMIE) and 848–922 (VIEV…GIAP).

This sequence belongs to the GlnD family. Mg(2+) serves as cofactor.

It catalyses the reaction [protein-PII]-L-tyrosine + UTP = [protein-PII]-uridylyl-L-tyrosine + diphosphate. The catalysed reaction is [protein-PII]-uridylyl-L-tyrosine + H2O = [protein-PII]-L-tyrosine + UMP + H(+). Its activity is regulated as follows. Uridylyltransferase (UTase) activity is inhibited by glutamine, while glutamine activates uridylyl-removing (UR) activity. Its function is as follows. Modifies, by uridylylation and deuridylylation, the PII regulatory proteins (GlnB and homologs), in response to the nitrogen status of the cell that GlnD senses through the glutamine level. Under low glutamine levels, catalyzes the conversion of the PII proteins and UTP to PII-UMP and PPi, while under higher glutamine levels, GlnD hydrolyzes PII-UMP to PII and UMP (deuridylylation). Thus, controls uridylylation state and activity of the PII proteins, and plays an important role in the regulation of nitrogen fixation and metabolism. This Mesorhizobium japonicum (strain LMG 29417 / CECT 9101 / MAFF 303099) (Mesorhizobium loti (strain MAFF 303099)) protein is Bifunctional uridylyltransferase/uridylyl-removing enzyme.